The sequence spans 110 residues: UPF0060 membrane protein Psyc_0916 (110 aa).

The next 4 membrane-spanning stretches (helical) occupy residues 7–27 (VGLFAITALAEIAGCYLPYLW), 33–53 (SIWLLIPGALSLVAFVWLLSL), 63–83 (AAYGGVYISMAILWLWTVNGI), and 87–107 (TWDIVGSVVALIGMAIIMFAP).

It belongs to the UPF0060 family.

The protein localises to the cell inner membrane. This is UPF0060 membrane protein Psyc_0916 from Psychrobacter arcticus (strain DSM 17307 / VKM B-2377 / 273-4).